Consider the following 99-residue polypeptide: Cell division topological specificity factor (99 aa).

This sequence belongs to the MinE family.

Its function is as follows. Prevents the cell division inhibition by proteins MinC and MinD at internal division sites while permitting inhibition at polar sites. This ensures cell division at the proper site by restricting the formation of a division septum at the midpoint of the long axis of the cell. In Tolumonas auensis (strain DSM 9187 / NBRC 110442 / TA 4), this protein is Cell division topological specificity factor.